The sequence spans 201 residues: Lipopolysaccharide core heptose(II)-phosphate phosphatase (201 aa).

Residues 1–35 form the signal peptide; the sequence is MLAFTLRFIKNKRYLATLAGALVIIAGLTSQHAWS.

It belongs to the phosphoglycerate mutase family. Ais subfamily.

It localises to the periplasm. It functions in the pathway bacterial outer membrane biogenesis; lipopolysaccharide metabolism. Functionally, catalyzes the dephosphorylation of heptose(II) of the outer membrane lipopolysaccharide core. The protein is Lipopolysaccharide core heptose(II)-phosphate phosphatase of Salmonella newport (strain SL254).